Reading from the N-terminus, the 730-residue chain is Diacylglycerol kinase alpha (730 aa).

EF-hand domains follow at residues 111–146 (RPEDKLEFTFKLYDMDRNGILDSTEVEKIILQMMRV) and 156–191 (ELRPILQEMMREMDQDGSGSVSLDEWVRAGATTVPL). Residues aspartate 124, aspartate 126, asparagine 128, glutamate 135, aspartate 169, aspartate 171, serine 173, serine 175, and glutamate 180 each coordinate Ca(2+). 2 Phorbol-ester/DAG-type zinc fingers span residues 206–254 (NHIW…AQPC) and 270–320 (SHLW…GPEC). One can recognise a DAGKc domain in the interval 368-501 (SNTHPLLVFI…LDRWFLEVIP (134 aa)). The residue at position 479 (lysine 479) is an N6-acetyllysine.

It belongs to the eukaryotic diacylglycerol kinase family. In terms of assembly, monomer.

The protein resides in the cytoplasm. The protein localises to the cytosol. It carries out the reaction a 1,2-diacyl-sn-glycerol + ATP = a 1,2-diacyl-sn-glycero-3-phosphate + ADP + H(+). The enzyme catalyses a 1-O-alkyl-sn-glycerol + ATP = a 1-O-alkyl-sn-glycero-3-phosphate + ADP + H(+). The catalysed reaction is 1-O-alkyl-2-acyl-sn-glycerol + ATP = 1-O-alkyl-2-acyl-sn-glycero-3-phosphate + ADP + H(+). It catalyses the reaction 1,2-dihexadecanoyl-sn-glycerol + ATP = 1,2-dihexadecanoyl-sn-glycero-3-phosphate + ADP + H(+). It carries out the reaction 1-hexadecanoyl-2-(9Z-octadecenoyl)-sn-glycerol + ATP = 1-hexadecanoyl-2-(9Z-octadecenoyl)-sn-glycero-3-phosphate + ADP + H(+). The enzyme catalyses 2-(9Z-octadecenoyl)-glycerol + ATP = 2-(9Z-octadecenoyl)-sn-glycero-3-phosphate + ADP + H(+). The catalysed reaction is 1,2-di-(9Z-octadecenoyl)-sn-glycerol + ATP = 1,2-di-(9Z-octadecenoyl)-sn-glycero-3-phosphate + ADP + H(+). It catalyses the reaction 1-octadecanoyl-2-(5Z,8Z,11Z,14Z-eicosatetraenoyl)-sn-glycerol + ATP = 1-octadecanoyl-2-(5Z,8Z,11Z,14Z-eicosatetraenoyl)-sn-glycero-3-phosphate + ADP + H(+). It carries out the reaction 1,2-didecanoyl-sn-glycerol + ATP = 1,2-didecanoyl-sn-glycero-3-phosphate + ADP + H(+). The enzyme catalyses 1-O-hexadecyl-2-acetyl-sn-glycerol + ATP = 1-O-hexadecyl-2-acetyl-sn-glycero-3-phosphate + ADP + H(+). The catalysed reaction is 1-O-hexadecyl-2-(5Z,8Z,11Z,14Z-eicosatetraenoyl)-sn-glycerol + ATP = 1-O-hexadecyl-2-(5Z,8Z,11Z,14Z-eicosatetraenoyl)-sn-glycero-3-phosphate + ADP + H(+). It catalyses the reaction 1-O-hexadecyl-2-(9Z-octadecenoyl)-sn-glycerol + ATP = 1-O-hexadecyl-2-(9Z-octadecenoyl)-sn-glycero-3-phosphate + ADP + H(+). It carries out the reaction 1-O-hexadecyl-sn-glycerol + ATP = 1-O-hexadecyl-sn-glycero-3-phosphate + ADP + H(+). It participates in lipid metabolism; glycerolipid metabolism. With respect to regulation, stimulated by calcium and phosphatidylserine. Its function is as follows. Diacylglycerol kinase that converts diacylglycerol/DAG into phosphatidic acid/phosphatidate/PA and regulates the respective levels of these two bioactive lipids. Thereby, acts as a central switch between the signaling pathways activated by these second messengers with different cellular targets and opposite effects in numerous biological processes. Also plays an important role in the biosynthesis of complex lipids. Can also phosphorylate 1-alkyl-2-acylglycerol in vitro as efficiently as diacylglycerol provided it contains an arachidonoyl group. Also involved in the production of alkyl-lysophosphatidic acid, another bioactive lipid, through the phosphorylation of 1-alkyl-2-acetyl glycerol. This chain is Diacylglycerol kinase alpha (Dgka), found in Mus musculus (Mouse).